The following is a 28-amino-acid chain: ALWKDILKNVGKAAGKAVLNTVTDMVNE.

In terms of tissue distribution, expressed by the skin glands.

The protein resides in the secreted. Its function is as follows. Has antimicrobial activity. The chain is Dermaseptin-2.2TR from Phyllomedusa trinitatis (Trinidad leaf frog).